We begin with the raw amino-acid sequence, 307 residues long: Estrogen receptor (307 aa).

The nuclear receptor DNA-binding region spans 1 to 43 (GHNDYMCPATNQCTIDKNRRKSCQACRLRKCYEVGMMKGGIRK). The segment at 7–31 (CPATNQCTIDKNRRKSCQACRLRKC) adopts an NR C4-type zinc-finger fold. The tract at residues 44–95 (DRRGGRILKHKRQREEHDNRNAGAIVERRSPNLWPSPLMITHNKKNSPALSL) is hinge. In terms of domain architecture, NR LBD spans 96–307 (TADQIVSALL…HFRHMSNKGM (212 aa)).

Belongs to the nuclear hormone receptor family. NR3 subfamily. In terms of assembly, binds DNA as a homodimer. Can form a heterodimer with ER-beta.

It is found in the nucleus. In terms of biological role, the steroid hormones and their receptors are involved in the regulation of eukaryotic gene expression and affect cellular proliferation and differentiation in target tissues. In Aspidoscelis uniparens (Desert grassland whiptail lizard), this protein is Estrogen receptor (ESR1).